Here is a 214-residue protein sequence, read N- to C-terminus: ATP-dependent Clp protease proteolytic subunit 3 (214 aa).

The active-site Nucleophile is the serine 106. The active site involves histidine 131.

Belongs to the peptidase S14 family. Fourteen ClpP subunits assemble into 2 heptameric rings which stack back to back to give a disk-like structure with a central cavity, resembling the structure of eukaryotic proteasomes.

Its subcellular location is the cytoplasm. The catalysed reaction is Hydrolysis of proteins to small peptides in the presence of ATP and magnesium. alpha-casein is the usual test substrate. In the absence of ATP, only oligopeptides shorter than five residues are hydrolyzed (such as succinyl-Leu-Tyr-|-NHMec, and Leu-Tyr-Leu-|-Tyr-Trp, in which cleavage of the -Tyr-|-Leu- and -Tyr-|-Trp bonds also occurs).. Functionally, cleaves peptides in various proteins in a process that requires ATP hydrolysis. Has a chymotrypsin-like activity. Plays a major role in the degradation of misfolded proteins. This chain is ATP-dependent Clp protease proteolytic subunit 3, found in Trichormus variabilis (strain ATCC 29413 / PCC 7937) (Anabaena variabilis).